The following is a 689-amino-acid chain: MSIDNELSKCRNIGIMAHIDAGKTTTTERILFYTGKQNRIGEVHEGAASMDWMEQEKERGITITSAATTCFWNDHRINIIDTPGHVDFTIEVERSLRVLDGAVAVFDGVAGVEPQSETVWRQADKYNVPRICFMNKMDRMGANFYRCVDMVIDRLGATPLVLQLPIGIEKDFVGVVDLLEMRSIIWDEESLGASFHYGEIPGDMIDIAHEYRHKLLESAVELNDDAMNLYFEGKEVPVSLLKNCIRLGVIQSKFVPVLCGSAFKNRGVQPLLDAVVDFLPAPNDVAMIEGIDVKTSNPVSIKSSVNEKFVALAFKVMTDKFVGSLTFIRIYSGKLSSKTTVLNAVKNSTESIGRILLMHANNREDITEAKAGDIVALAGLKKTVTGDTLCALDYPVVLERMEFPDPVMEIAVEPKSTADQEKMGIALSRLVSEDPSLGMCVNPESGQTILKGMGELHLEVIVDRMRREFNVEANIGAPQVAYRETITKSVEIEYIHKKQTGGAGQFAKVNILFEPLPPGSGFQFESKITGGAIPKEYIPGVQNGLEAIRGSGMLAGFPVIDFKATLFDGAFHEVDSSPLAFELAAKGAFRDMVNKAGAILLEPIMKVEIVTPDEYMGDVIGDVNSRRGRVAEMQDRNNTKVILAFIPLAKMFGYVKDLRSMSQGRAQYSMYFSCYEQVPDNILASEIKK.

The 276-residue stretch at serine 8 to asparagine 283 folds into the tr-type G domain. Residues alanine 17 to threonine 24, aspartate 81 to histidine 85, and asparagine 135 to aspartate 138 contribute to the GTP site.

This sequence belongs to the TRAFAC class translation factor GTPase superfamily. Classic translation factor GTPase family. EF-G/EF-2 subfamily.

The protein localises to the cytoplasm. Its function is as follows. Catalyzes the GTP-dependent ribosomal translocation step during translation elongation. During this step, the ribosome changes from the pre-translocational (PRE) to the post-translocational (POST) state as the newly formed A-site-bound peptidyl-tRNA and P-site-bound deacylated tRNA move to the P and E sites, respectively. Catalyzes the coordinated movement of the two tRNA molecules, the mRNA and conformational changes in the ribosome. The chain is Elongation factor G from Ehrlichia ruminantium (strain Welgevonden).